Reading from the N-terminus, the 354-residue chain is Elongation factor Ts (354 aa).

An involved in Mg(2+) ion dislocation from EF-Tu region spans residues Thr81 to Val84.

Belongs to the EF-Ts family.

Its subcellular location is the cytoplasm. In terms of biological role, associates with the EF-Tu.GDP complex and induces the exchange of GDP to GTP. It remains bound to the aminoacyl-tRNA.EF-Tu.GTP complex up to the GTP hydrolysis stage on the ribosome. The chain is Elongation factor Ts from Campylobacter concisus (strain 13826).